The chain runs to 281 residues: Short neuropeptide F (281 aa).

The signal sequence occupies residues 1–30 (MFHLKRELSQGCALALICLVSLQMQQPAQA). Positions 31 to 64 (EVSSAQGTPLSNLYDNLLQREYAGPVVFPNHQVE) are excised as a propeptide. Phenylalanine amide is present on residues Phe-77 and Phe-111. A propeptide spanning residues 115–165 (DPSLPQMRRTAYDDLLERELTLNSQQQQQQLGTEPDSDLGADYDGLYERVV) is cleaved from the precursor. The disordered stretch occupies residues 137-156 (NSQQQQQQLGTEPDSDLGAD). Trp-173 carries the tryptophan amide modification. Positions 176–246 (SVPQFEANNA…NDTSEFQREV (71 aa)) are excised as a propeptide. Residues 226–281 (ANDEDTDTDLNNDTSEFQREVRKPMRLRWGRSTGKAPSEQKHTPEETSSIPPKTQN) form a disordered region. Tryptophan amide is present on Trp-254. The propeptide occupies 257–281 (STGKAPSEQKHTPEETSSIPPKTQN). Positions 271-281 (ETSSIPPKTQN) are enriched in polar residues.

This sequence belongs to the NPY family. In terms of tissue distribution, stage 17 embryos show expression in the two brain hemispheres (neural cells located in the dorsal posterior region), the connected ventral ganglion (pairs of neural cells along the ventral midline) and the peripheral nervous system (expressed in the antennal-maxillary sensory cells). In the brain hemispheres of the feeding third instar larva, expression in neural cells is located in the dorsal-anterior region of the protocerebrum. In the larval ventral ganglion, expression is seen in the neural cells located in the subesophagial region, along the ventral midline and in thoracic and abdominal segments. In the adult brain, expression is seen in the medulla and the mushroom body calyx (at protein level).

Its subcellular location is the secreted. In terms of biological role, plays a role in controlling food intake and regulating body size. The polypeptide is Short neuropeptide F (sNPF) (Drosophila melanogaster (Fruit fly)).